The primary structure comprises 406 residues: Interactor protein for cytohesin exchange factors 1 (406 aa).

In terms of domain architecture, PH spans 13–112 (HADCQGWLYK…WLNKLGFAVT (100 aa)). Disordered stretches follow at residues 118–173 (TKDE…FSSL), 228–285 (CRVS…EDDE), and 383–406 (PQDPEVTPQEIMNPTSSDCVENSL). The segment covering 123–134 (CYSESEQEDPET) has biased composition (acidic residues). Residues 144-160 (ASATSSPVAARRASSSS) are compositionally biased toward low complexity. Positions 228 to 239 (CRVSENSSTTPE) are enriched in polar residues. Low complexity predominate over residues 243–259 (LNSLSSDDTSSLNNSQD). Over residues 272-285 (MTDRDEIKSSEDDE) the composition is skewed to basic and acidic residues. The necessary for interaction with PSCD2 and to translocate to the plasma membrane stretch occupies residues 285-406 (EMEKLYKSLE…TSSDCVENSL (122 aa)). Residues 392–406 (EIMNPTSSDCVENSL) show a composition bias toward polar residues.

In terms of assembly, interacts with guanine-nucleotide exchange factors PSCD1, PSCD2, PSCD3 and PSCD4. In terms of tissue distribution, expressed in brain, spleen, lung, testis and kidney.

It localises to the cytoplasm. Its subcellular location is the cell membrane. Enhances the promotion of guanine-nucleotide exchange by PSCD2 on ARF6 in a concentration-dependent manner. In Rattus norvegicus (Rat), this protein is Interactor protein for cytohesin exchange factors 1 (Ipcef1).